The sequence spans 450 residues: 3-phosphoshikimate 1-carboxyvinyltransferase (450 aa).

The interval 1-26 is disordered; the sequence is MSAHGDPIPMTAHPSGPLSGTAQVPG. Residues lysine 28, serine 29, and arginine 33 each contribute to the 3-phosphoshikimate site. Residue lysine 28 participates in phosphoenolpyruvate binding. Phosphoenolpyruvate-binding residues include glycine 101 and arginine 129. The 3-phosphoshikimate site is built by serine 174, glutamine 176, aspartate 327, and lysine 354. Phosphoenolpyruvate is bound at residue glutamine 176. Aspartate 327 serves as the catalytic Proton acceptor. Phosphoenolpyruvate-binding residues include arginine 358 and arginine 403.

The protein belongs to the EPSP synthase family. Monomer.

Its subcellular location is the cytoplasm. It carries out the reaction 3-phosphoshikimate + phosphoenolpyruvate = 5-O-(1-carboxyvinyl)-3-phosphoshikimate + phosphate. It participates in metabolic intermediate biosynthesis; chorismate biosynthesis; chorismate from D-erythrose 4-phosphate and phosphoenolpyruvate: step 6/7. Functionally, catalyzes the transfer of the enolpyruvyl moiety of phosphoenolpyruvate (PEP) to the 5-hydroxyl of shikimate-3-phosphate (S3P) to produce enolpyruvyl shikimate-3-phosphate and inorganic phosphate. The polypeptide is 3-phosphoshikimate 1-carboxyvinyltransferase (Dinoroseobacter shibae (strain DSM 16493 / NCIMB 14021 / DFL 12)).